Consider the following 174-residue polypeptide: Shikimate kinase 2 (174 aa).

Residue 12-17 participates in ATP binding; the sequence is GCGKTT. The Mg(2+) site is built by T16 and D32. D34, R58, and G79 together coordinate substrate. The tract at residues 112–126 is LID domain; sequence QAAPEEDLRPTLTGK. ATP is bound at residue R120. R139 lines the substrate pocket.

The protein belongs to the shikimate kinase family. AroL subfamily. Monomer. It depends on Mg(2+) as a cofactor.

The protein resides in the cytoplasm. The enzyme catalyses shikimate + ATP = 3-phosphoshikimate + ADP + H(+). It participates in metabolic intermediate biosynthesis; chorismate biosynthesis; chorismate from D-erythrose 4-phosphate and phosphoenolpyruvate: step 5/7. Functionally, catalyzes the specific phosphorylation of the 3-hydroxyl group of shikimic acid using ATP as a cosubstrate. The sequence is that of Shikimate kinase 2 from Escherichia coli O81 (strain ED1a).